Consider the following 309-residue polypeptide: Olfactory receptor 7A10 (309 aa).

Residues M1 to A25 lie on the Extracellular side of the membrane. An N-linked (GlcNAc...) asparagine glycan is attached at N5. The helical transmembrane segment at F26–I46 threads the bilayer. At L47 to H54 the chain is on the cytoplasmic side. Residues L55–S75 form a helical membrane-spanning segment. Residues T76–T99 lie on the Extracellular side of the membrane. C97 and C189 form a disulfide bridge. A helical membrane pass occupies residues Q100–Y120. Topologically, residues D121 to Q139 are cytoplasmic. The helical transmembrane segment at L140 to S160 threads the bilayer. The Extracellular portion of the chain corresponds to L161–I197. Residues V198–S217 traverse the membrane as a helical segment. Topologically, residues Y218 to A237 are cytoplasmic. A helical transmembrane segment spans residues F238–V258. The Extracellular segment spans residues Y259–G271. Residues A272–L292 traverse the membrane as a helical segment. Residues R293–Q309 lie on the Cytoplasmic side of the membrane.

The protein belongs to the G-protein coupled receptor 1 family.

The protein localises to the cell membrane. Odorant receptor. The protein is Olfactory receptor 7A10 (OR7A10) of Homo sapiens (Human).